We begin with the raw amino-acid sequence, 276 residues long: Undecaprenyl-diphosphatase (276 aa).

6 consecutive transmembrane segments (helical) span residues 43–63 (RAMA…VWEF), 85–105 (LNLL…ADTI), 109–129 (LFNA…MLWA), 183–203 (AATE…AVYS), 218–238 (VFAI…RALL), and 254–274 (IAFG…WASA).

This sequence belongs to the UppP family.

The protein resides in the cell inner membrane. The enzyme catalyses di-trans,octa-cis-undecaprenyl diphosphate + H2O = di-trans,octa-cis-undecaprenyl phosphate + phosphate + H(+). Its function is as follows. Catalyzes the dephosphorylation of undecaprenyl diphosphate (UPP). Confers resistance to bacitracin. The chain is Undecaprenyl-diphosphatase from Pseudomonas syringae pv. tomato (strain ATCC BAA-871 / DC3000).